The following is a 197-amino-acid chain: Tic20 family protein Ycf60 (197 aa).

5 helical membrane passes run I3–V23, F47–L66, L81–F101, V118–L138, and M141–G161.

Belongs to the Tic20 family.

The protein resides in the plastid. It is found in the chloroplast membrane. The sequence is that of Tic20 family protein Ycf60 (ycf60) from Cyanidioschyzon merolae (strain NIES-3377 / 10D) (Unicellular red alga).